The chain runs to 248 residues: Chromatin target of PRMT1 protein (248 aa).

Ala2 is modified (N-acetylalanine). Ser40, Ser49, and Ser64 each carry phosphoserine. Lys70 is covalently cross-linked (Glycyl lysine isopeptide (Lys-Gly) (interchain with G-Cter in SUMO2)). A disordered region spans residues 151 to 204 (LRRGGVRGRGGPGRGGLGRGAMGRGGIGGRGRGMIGRGRGGFGGRGRGRGRGRG). Residues 153–206 (RGGVRGRGGPGRGGLGRGAMGRGGIGGRGRGMIGRGRGGFGGRGRGRGRGRGAL) form an interaction with PRMT1 region. Positions 157–195 (RGRGGPGRGGLGRGAMGRGGIGGRGRGMIGRGRGGFGGR) are enriched in gly residues. The short motif at 194–203 (GRGRGRGRGR) is the GAR motif; involved in 5hmC binding element. A Phosphothreonine modification is found at Thr242.

Interacts with PRMT1 and PRMT5. Interacts with the 5FMC complex; the interaction is methylation-dependent. Interacts with FYTTD1, SET and PRC1 complex members CBX4, RNF2 and PHC2; the interactions are methylation-independent. Interacts with ZNF148. Interacts with WDR77 and ER. Post-translationally, asymmetrically methylated by PRMT1. Symmetrically methylated by PRMT5.

It localises to the nucleus. The protein resides in the nucleolus. The protein localises to the nucleoplasm. Its subcellular location is the nucleus speckle. Its function is as follows. Plays an important role in the ligand-dependent activation of estrogen receptor target genes. May play a role in the silencing of fetal globin genes. Recruits the 5FMC complex to ZNF148, leading to desumoylation of ZNF148 and subsequent transactivation of ZNF148 target genes. Required for the tumorigenicity of glioblastoma cells. Binds to 5-hydroxymethylcytosine (5hmC) and associates with the methylosome complex containing PRMT1, PRMT5, MEP50 and ERH. The CHTOP-methylosome complex associated with 5hmC methylates H4R3 and transactivates genes involved in glioblastomagenesis. The polypeptide is Chromatin target of PRMT1 protein (Chtop) (Rattus norvegicus (Rat)).